Here is a 3746-residue protein sequence, read N- to C-terminus: N-(5-amino-5-carboxypentanoyl)-L-cysteinyl-D-valine synthase (3746 aa).

The tract at residues 299–711 (EEVVERHEDK…GRADFQIKLR (413 aa)) is adenylation (A) domain 1. The 78-residue stretch at 818–895 (DLRGDTEIAL…RMADLLQNKQ (78 aa)) folds into the Carrier 1 domain. An O-(pantetheine 4'-phosphoryl)serine modification is found at Ser855. The condensation (C) domain 1 stretch occupies residues 918 to 1372 (NIYLANSLQQ…YLSSIQLEQL (455 aa)). Residues 1391–1801 (FENEASQKPD…GRNDFQVKIR (411 aa)) are adenylation (A) domain 2. In terms of domain architecture, Carrier 2 spans 1902–1979 (PPRSEIERSL…AQTHLILNDA (78 aa)). Position 1939 is an O-(pantetheine 4'-phosphoryl)serine (Ser1939). A condensation (C) domain 2 region spans residues 1994-2434 (QMIPVSRAQE…SELSAEGINE (441 aa)). The segment at 2478–2883 (AFLAAEKIAV…GRGDLQIKMR (406 aa)) is adenylation (A) domain 3. One can recognise a Carrier 3 domain in the interval 2991-3066 (PPRNIIEAKM…ALHDHVFMKD (76 aa)). An O-(pantetheine 4'-phosphoryl)serine modification is found at Ser3026. The epimerase (E) domain stretch occupies residues 3084–3500 (GEAPLLPIQD…NKILDGRASQ (417 aa)). Residues 3530–3732 (TLFLLPPGEG…FSWVGNPQQV (203 aa)) form a thioesterase (TE) domain region.

Belongs to the NRP synthetase family. It depends on pantetheine 4'-phosphate as a cofactor. The cofactor is Mg(2+).

The protein resides in the cytoplasm. It is found in the cytosol. The protein localises to the vacuole membrane. It carries out the reaction L-2-aminoadipate + L-valine + L-cysteine + 3 ATP + H2O = N-[(5S)-5-amino-5-carboxypentanoyl]-L-cysteinyl-D-valine + 3 AMP + 3 diphosphate + 3 H(+). It functions in the pathway antibiotic biosynthesis; penicillin G biosynthesis; penicillin G from L-alpha-aminoadipate and L-cysteine and L-valine: step 1/3. Nonribosomal peptide synthetase; part of the gene cluster that mediates the biosynthesis of penicillin, the world's most important antibiotic. The trimodular NRPS acvA produces the tripeptide N-[(5S)-5-amino-5-carboxypentanoyl]-L-cysteinyl-D-valine (LLD-ACV or ACV) via condensation of the 3 residues L-2-aminoadipate, L-cysteine and L-valine. The precursor amino acids for penicillin biosynthesis are withdrawn from the vacuolar amino acid pool by the MFS-type transporter penV. Each of the constituent amino acids of the tripeptide ACV are activated as aminoacyl-adenylates with peptide bonds formed through the participation of amino acid thioester intermediates. The penicillin biosynthesis occurs via 3 enzymatic steps, the first corresponding to the production of the tripeptide N-[(5S)-5-amino-5-carboxypentanoyl]-L-cysteinyl-D-valine (LLD-ACV or ACV) by the NRPS acvA. The tripeptide ACV is then cyclized to isopenicillin N (IPN) by the isopenicillin N synthase ipnA that forms the beta-lactam nucleus. Finally, the alpha-aminoadipyl side chain is exchanged for phenylacetic acid by the isopenicillin N acyltransferase aatA to yield penicillin in the peroxisomal matrix. This is N-(5-amino-5-carboxypentanoyl)-L-cysteinyl-D-valine synthase from Penicillium chrysogenum (Penicillium notatum).